We begin with the raw amino-acid sequence, 261 residues long: Acetoacetate decarboxylase 2 (261 aa).

K116 functions as the Schiff-base intermediate with acetoacetate in the catalytic mechanism.

This sequence belongs to the ADC family.

It carries out the reaction acetoacetate + H(+) = acetone + CO2. In terms of biological role, catalyzes the conversion of acetoacetate to acetone and carbon dioxide. This Mesorhizobium japonicum (strain LMG 29417 / CECT 9101 / MAFF 303099) (Mesorhizobium loti (strain MAFF 303099)) protein is Acetoacetate decarboxylase 2.